The following is a 615-amino-acid chain: MKVALLANPARGEINVLLATAYELIRLGHDVTFLTGSSFANAIAEFRSEQNDPILAARIHFSDLGNARAVEDFTRGMQSHLKGLRKPPGDYSSMEICQIVALVTEQEFRDAATMVRDRLLEIEPDMIAVDALSPNLVTGCRMTGLPWMFTVPCSPSLTATRKSLFDPHPMGRRRQRTLMSALENLKLTFIETYRNATKKDLYARRALLKNEFGLNSMGFNGDSAIVPPLWKDRNCVGGIHFNTPGLTDSIRQPHQIHFVGAGVTSDPENHDTPVFEAASFLKQLSPSSSTTFKPLFPPLSKTGRDLDVEWMDEAYAAGQLVVYLNMGSMFLWTDAEVRSCLRAFERLYEQSGGKIKLLFKLNKPKRTPNNTGASTPTAPISSPDFEEKQRTVMGSARPVGASNLVSEKLADAIKNVTPRRKTDADKGYSQFTLSEFEGLEYVRFTRWVHDQRSIYKHPALRVVIHHGGGNSFNEAVHYALPQMILSQWFDTHEYAILAERFGIGLRSKHAPKIDENDLVNTMTRLLQGPEAEKIRRNAKVWSIRSRNAGGAPAAARLIEAQAMLFNQQKQLELAASEVRAAVDTLSGKSSVADLESETAFTPNMLSGAASTVGSD.

The tract at residues 366 to 387 is disordered; the sequence is RTPNNTGASTPTAPISSPDFEE. A compositionally biased stretch (polar residues) spans 367–380; it reads TPNNTGASTPTAPI.

Belongs to the UDP-glycosyltransferase family.

It localises to the vacuole membrane. It functions in the pathway secondary metabolite biosynthesis. Erythritol-mannosyl-transferase; part of the gene cluster that mediates the biosynthesis of mannosylerythritol lipids (MELs), surface-active substances that enhance the availability of water-insoluble substrates. Mannosylerythritol lipid production is responsible for hemolytic activity of Ustilago maydis. Depending on the number of acetyl groups, mannosylerythritol lipids can be differentiated into MEL A (fully acetylated), MEL B and MEL C (monoacetylated at R-6 and R-4, respectively), and the fully deacetylated MEL D. The first step in the pathway is the generation of mannosylerythritol by the glycosyltransferase EMT1 which catalyzes the transfer of GDP-mannose to the C-4 atom of meso-erythritol. This reaction has to be stereospecific, since only mannosyl-D-erythritol is generated. The produced disaccharide is subsequently acylated with fatty acids of various lengths derived from the peroxisomal beta-oxidation by the peroxisomal acyltransferases MAC1 and MAC2 at positions C-2 and C-3, repectively. The existence of MEL derivatives which carry an acetyl group at C-2 implies that at least MAC1 also accepts acetyl-CoA as a donor. The final step of MEL biosynthesis is the acetylation of the fully acylated mannosylerythritol lipids catalyzed by the acetyl-CoA-dependent acetyltransferase MAT1. MAT1 displays a relaxed regioselectivity and is able to transfer acetylgroups to both positions C-4 and C-6 of the mannosyl moiety. This is Erythritol-mannosyl-transferase 1 from Mycosarcoma maydis (Corn smut fungus).